We begin with the raw amino-acid sequence, 360 residues long: Putative FBD-associated F-box protein At5g56430 (360 aa).

Residues 1–53 form the F-box domain; that stretch reads MRNISDLPNDLLVKILSLIPIKVAASTSLLSKRWGSVWKLIPTLDYDGTYSAA. Kelch repeat units lie at residues 140–186 and 235–285; these read IRYT…EQLD and VMCS…SVPE. One can recognise an FBD domain in the interval 276-326; it reads KWEQPNSVPECLLVSLETVKWILYKGTQEEKDVVKYLLKNGNFIKTMSIRF.

In Arabidopsis thaliana (Mouse-ear cress), this protein is Putative FBD-associated F-box protein At5g56430.